A 120-amino-acid polypeptide reads, in one-letter code: Urease subunit beta (120 aa).

Belongs to the urease beta subunit family. In terms of assembly, heterotrimer of UreA (gamma), UreB (beta) and UreC (alpha) subunits. Three heterotrimers associate to form the active enzyme.

Its subcellular location is the cytoplasm. It carries out the reaction urea + 2 H2O + H(+) = hydrogencarbonate + 2 NH4(+). The protein operates within nitrogen metabolism; urea degradation; CO(2) and NH(3) from urea (urease route): step 1/1. The sequence is that of Urease subunit beta from Corynebacterium efficiens (strain DSM 44549 / YS-314 / AJ 12310 / JCM 11189 / NBRC 100395).